The chain runs to 207 residues: Small ribosomal subunit protein uS4c (207 aa).

Residues 92–153 (MRLDNILFRL…PKTYQSILSK (62 aa)) enclose the S4 RNA-binding domain.

It belongs to the universal ribosomal protein uS4 family. In terms of assembly, part of the 30S ribosomal subunit. Contacts protein S5. The interaction surface between S4 and S5 is involved in control of translational fidelity.

The protein localises to the plastid. Its subcellular location is the chloroplast. Functionally, one of the primary rRNA binding proteins, it binds directly to 16S rRNA where it nucleates assembly of the body of the 30S subunit. In terms of biological role, with S5 and S12 plays an important role in translational accuracy. In Equisetum laevigatum (Smooth horsetail), this protein is Small ribosomal subunit protein uS4c (rps4).